The primary structure comprises 332 residues: Adenosine deaminase (332 aa).

2 residues coordinate Zn(2+): His12 and His14. Residues His14, Asp16, and Gly170 each coordinate substrate. Position 197 (His197) interacts with Zn(2+). The Proton donor role is filled by Glu200. Asp278 lines the Zn(2+) pocket. Substrate is bound at residue Asp279.

It belongs to the metallo-dependent hydrolases superfamily. Adenosine and AMP deaminases family. Adenosine deaminase subfamily. Zn(2+) serves as cofactor.

The catalysed reaction is adenosine + H2O + H(+) = inosine + NH4(+). It carries out the reaction 2'-deoxyadenosine + H2O + H(+) = 2'-deoxyinosine + NH4(+). Functionally, catalyzes the hydrolytic deamination of adenosine and 2-deoxyadenosine. This chain is Adenosine deaminase, found in Serratia proteamaculans (strain 568).